The sequence spans 425 residues: MTILDDLQWRGLYADCTDLAALTQRLGQGPVTLYCGFDPTADSLHVGNLVPLLALRRFQLHGHHPIALAGGATGMVGDPSGRSAERNLLTPDQVAHNIASIKQQLGRFLDFDATTNPARMVDNSTWTAPISFLEFLRDVGKHFSVNAMLAKESVRARLESESGISYTEFSYMLLQAHDFLHLRETMNCELQVGATDQWGNITAGTDLIRKKLGAPAWGLTFPLLTKSDGTKYGKSTSGAVYLDPKRTTPYRFYQFFVQAEDADVIKLLKVLTFLSAEEITALDTDLKANPGARAAQKALARAVTTLVHGDTECANAIRASEIMFGGGLDGISESLFQDVVGEIPTKELEAAKLSGAGAPLVELLVHAGLAPSKGQARKDIDGGGIYVNNARVGEASRAVTTGELLFGKYLLLRKGKRTYTVVKIV.

Tyr-34 is an L-tyrosine binding site. The 'HIGH' region motif lies at 39-48 (PTADSLHVGN). Residues Tyr-171 and Gln-175 each contribute to the L-tyrosine site. A 'KMSKS' region motif is present at residues 231–235 (KYGKS). An ATP-binding site is contributed by Lys-234. Positions 358 to 424 (APLVELLVHA…GKRTYTVVKI (67 aa)) constitute an S4 RNA-binding domain.

Belongs to the class-I aminoacyl-tRNA synthetase family. TyrS type 1 subfamily. Homodimer.

It localises to the cytoplasm. It carries out the reaction tRNA(Tyr) + L-tyrosine + ATP = L-tyrosyl-tRNA(Tyr) + AMP + diphosphate + H(+). In terms of biological role, catalyzes the attachment of tyrosine to tRNA(Tyr) in a two-step reaction: tyrosine is first activated by ATP to form Tyr-AMP and then transferred to the acceptor end of tRNA(Tyr). The sequence is that of Tyrosine--tRNA ligase from Opitutus terrae (strain DSM 11246 / JCM 15787 / PB90-1).